A 458-amino-acid chain; its full sequence is Acetyl-CoA decarbonylase/synthase complex subunit gamma (458 aa).

The 59-residue stretch at 1 to 59 folds into the 4Fe-4S domain; the sequence is MQVTAMDVYRLLPKTNCGKCNEASCMAFATKLIEKEVTLDDCPQLSGDERQKLENLLAP. 4 residues coordinate [4Fe-4S] cluster: cysteine 17, cysteine 20, cysteine 25, and cysteine 42.

As to quaternary structure, heterodimer of delta and gamma chains. The ACDS complex is made up of alpha, epsilon, beta, gamma and delta chains with a probable stoichiometry of (alpha(2)epsilon(2))(4)-beta(8)-(gamma(1)delta(1))(8). The cofactor is corrinoid. Requires [4Fe-4S] cluster as cofactor.

The enzyme catalyses 5,6,7,8-tetrahydrosarcinapterin + methyl-Co(III)-[corrinoid Fe-S protein] = 5-methyltetrahydrosarcinapterin + Co(I)-[corrinoid Fe-S protein] + H(+). Part of a complex that catalyzes the reversible cleavage of acetyl-CoA, allowing autotrophic growth from CO(2). In Methanothermobacter thermautotrophicus (strain ATCC 29096 / DSM 1053 / JCM 10044 / NBRC 100330 / Delta H) (Methanobacterium thermoautotrophicum), this protein is Acetyl-CoA decarbonylase/synthase complex subunit gamma.